The sequence spans 359 residues: Peptide chain release factor 1 (359 aa).

The residue at position 236 (Gln236) is an N5-methylglutamine.

It belongs to the prokaryotic/mitochondrial release factor family. In terms of processing, methylated by PrmC. Methylation increases the termination efficiency of RF1.

The protein localises to the cytoplasm. Its function is as follows. Peptide chain release factor 1 directs the termination of translation in response to the peptide chain termination codons UAG and UAA. This chain is Peptide chain release factor 1, found in Streptococcus pyogenes serotype M18 (strain MGAS8232).